Reading from the N-terminus, the 112-residue chain is Large ribosomal subunit protein eL22 (112 aa).

This sequence belongs to the eukaryotic ribosomal protein eL22 family. As to quaternary structure, component of the large ribosomal subunit.

Its subcellular location is the cytoplasm. The chain is Large ribosomal subunit protein eL22 (RPL22) from Encephalitozoon cuniculi (strain GB-M1) (Microsporidian parasite).